A 102-amino-acid polypeptide reads, in one-letter code: Citrate lyase acyl carrier protein (102 aa).

S14 carries the O-(phosphoribosyl dephospho-coenzyme A)serine modification.

Belongs to the CitD family. In terms of assembly, oligomer with a subunit composition of (alpha,beta,gamma)6.

Its subcellular location is the cytoplasm. Its function is as follows. Covalent carrier of the coenzyme of citrate lyase. The polypeptide is Citrate lyase acyl carrier protein (Streptococcus pyogenes serotype M2 (strain MGAS10270)).